A 339-amino-acid chain; its full sequence is Ketol-acid reductoisomerase (NADP(+)) (339 aa).

In terms of domain architecture, KARI N-terminal Rossmann spans 1-182 (MRVYYDRDAD…GGGRAGIIET (182 aa)). Residues 24–27 (YGSQ), arginine 48, serine 51, serine 53, and 83–86 (DELQ) contribute to the NADP(+) site. Residue histidine 108 is part of the active site. Residue glycine 134 coordinates NADP(+). A KARI C-terminal knotted domain is found at 183-328 (TFREECETDL…AKLRDMMPWI (146 aa)). Residues aspartate 191, glutamate 195, glutamate 227, and glutamate 231 each contribute to the Mg(2+) site. Serine 252 provides a ligand contact to substrate.

The protein belongs to the ketol-acid reductoisomerase family. Mg(2+) serves as cofactor.

It carries out the reaction (2R)-2,3-dihydroxy-3-methylbutanoate + NADP(+) = (2S)-2-acetolactate + NADPH + H(+). The enzyme catalyses (2R,3R)-2,3-dihydroxy-3-methylpentanoate + NADP(+) = (S)-2-ethyl-2-hydroxy-3-oxobutanoate + NADPH + H(+). The protein operates within amino-acid biosynthesis; L-isoleucine biosynthesis; L-isoleucine from 2-oxobutanoate: step 2/4. Its pathway is amino-acid biosynthesis; L-valine biosynthesis; L-valine from pyruvate: step 2/4. Its function is as follows. Involved in the biosynthesis of branched-chain amino acids (BCAA). Catalyzes an alkyl-migration followed by a ketol-acid reduction of (S)-2-acetolactate (S2AL) to yield (R)-2,3-dihydroxy-isovalerate. In the isomerase reaction, S2AL is rearranged via a Mg-dependent methyl migration to produce 3-hydroxy-3-methyl-2-ketobutyrate (HMKB). In the reductase reaction, this 2-ketoacid undergoes a metal-dependent reduction by NADPH to yield (R)-2,3-dihydroxy-isovalerate. The sequence is that of Ketol-acid reductoisomerase (NADP(+)) from Rhodopseudomonas palustris (strain BisB18).